A 165-amino-acid chain; its full sequence is PTS system glucose-specific EIIA component (165 aa).

The PTS EIIA type-1 domain maps to 33–137 (DPVFAGRMMG…STITPIVITN (105 aa)). The Zn(2+) site is built by histidine 70 and histidine 85. Histidine 85 (tele-phosphohistidine intermediate; for EIIA activity) is an active-site residue. Histidine 85 bears the Phosphohistidine; by HPr mark.

Heterodimer with glycerol kinase (glpk). The cofactor is Zn(2+).

It is found in the cytoplasm. In terms of biological role, the phosphoenolpyruvate-dependent sugar phosphotransferase system (sugar PTS), a major carbohydrate active transport system, catalyzes the phosphorylation of incoming sugar substrates concomitantly with their translocation across the cell membrane. The enzyme II complex composed of PtsG and Crr is involved in glucose transport. This Bacillus anthracis protein is PTS system glucose-specific EIIA component (crr).